A 1158-amino-acid chain; its full sequence is Hephaestin (1158 aa).

Residues 1–23 (MESGHLLWALLFMQSLWPQLTDG) form the signal peptide. 6 Plastocyanin-like domains span residues 24–206 (ATRV…LITC), 218–366 (QRQD…VKSC), 370–560 (PPVD…LLVC), 570–718 (KQKG…VSQC), 731–903 (AARI…LAIC), and 911–1067 (HGGR…SRTE). Residues 24-1110 (ATRVYYLGIR…PIKNVEMLAS (1087 aa)) are Extracellular-facing. Residues G70 and Y73 each coordinate Na(+). H126 and H128 together coordinate Cu(2+). Position 126 (H126) interacts with O2. Residues K134, D152, and D153 each coordinate Ca(2+). N-linked (GlcNAc...) asparagine glycosylation occurs at N164. A disulfide bridge connects residues C180 and C206. Residues H186 and H188 each contribute to the Cu(2+) site. H186 contributes to the O2 binding site. Residue N236 is glycosylated (N-linked (GlcNAc...) asparagine). S265 provides a ligand contact to Na(+). C285 and C366 are disulfide-bonded. 3 residues coordinate Cu(2+): H304, C347, and H352. 3 residues coordinate Na(+): F416, G425, and Y428. A disulfide bridge connects residues C534 and C560. N-linked (GlcNAc...) asparagine glycosylation is present at N588. S617 is a binding site for Na(+). A disulfide bridge links C637 with C718. Cu(2+) is bound by residues H656, C699, H704, and M709. 2 N-linked (GlcNAc...) asparagine glycosylation sites follow: N714 and N758. The Na(+) site is built by F769 and G778. 2 N-linked (GlcNAc...) asparagine glycosylation sites follow: N829 and N873. The cysteines at positions 877 and 903 are disulfide-linked. A glycan (N-linked (GlcNAc...) asparagine) is linked at N931. Cu(2+)-binding residues include H1000, H1003, H1005, H1045, C1046, H1047, H1051, and M1056. H1003 and H1005 together coordinate O2. H1047 serves as a coordination point for O2. The helical transmembrane segment at 1111 to 1131 (VLVAISVTLLLVVLALGGVVW) threads the bilayer. Over 1132-1158 (YQHRQRKLRRNRRSILDDSFKLLSFKQ) the chain is Cytoplasmic. A phosphoserine mark is found at S1145, S1150, and S1155.

Belongs to the multicopper oxidase family. As to quaternary structure, part of a complex composed of SLC40A1/ferroportin, TF/transferrin and HEPH/hephaestin that transfers iron from cells to transferrin. Requires Cu cation as cofactor. In terms of tissue distribution, expressed by intestinal absorptive cells (at protein level). Also detected in breast, colon, bone trabecular cells and fibroblasts.

It localises to the basolateral cell membrane. It catalyses the reaction 4 Fe(2+) + O2 + 4 H(+) = 4 Fe(3+) + 2 H2O. In terms of biological role, plasma membrane ferroxidase that mediates the extracellular conversion of ferrous/Fe(2+) iron into its ferric/Fe(3+) form. Couples ferroportin which specifically exports ferrous/Fe(2+) iron from cells to transferrin that only binds and shuttles extracellular ferric/Fe(3+) iron throughout the body. By helping iron transfer from cells to blood mainly contributes to dietary iron absorption by the intestinal epithelium and more generally regulates iron levels in the body. This is Hephaestin from Homo sapiens (Human).